Reading from the N-terminus, the 450-residue chain is Sorting nexin-4 (450 aa).

Methionine 1 is modified (N-acetylmethionine). The disordered stretch occupies residues 1–53 (MEQAAPDPERLWQPAPLEPLSHPDAGLESMVGEETKGARDEGPGDGTMTENNF). The span at 33–42 (EETKGARDEG) shows a compositional bias: basic and acidic residues. The PX domain maps to 61–187 (SVSEAEKRTG…YLFLTQEGNW (127 aa)). A 1,2-diacyl-sn-glycero-3-phospho-(1D-myo-inositol-3-phosphate)-binding residues include arginine 106, serine 108, lysine 132, and arginine 154.

Belongs to the sorting nexin family. Heterodimer; heterodimerizes with SNX7 or SNX30. Interacts with WWC1/KIBRA. Identified in a complex with WWC1/KIBRA and dynein components DYNLL1 and DYNC1I2. Interacts with BIN1.

The protein resides in the early endosome. It is found in the early endosome membrane. In terms of biological role, involved in the regulation of endocytosis and in several stages of intracellular trafficking. Plays a role in recycling endocytosed transferrin receptor and prevent its degradation. Involved in autophagosome assembly by regulating trafficking and recycling of phospholipid scramblase ATG9A. The polypeptide is Sorting nexin-4 (Bos taurus (Bovine)).